Consider the following 170-residue polypeptide: Urease accessory protein UreE (170 aa).

The protein belongs to the UreE family.

The protein resides in the cytoplasm. Functionally, involved in urease metallocenter assembly. Binds nickel. Probably functions as a nickel donor during metallocenter assembly. This is Urease accessory protein UreE from Helicobacter pylori (strain P12).